We begin with the raw amino-acid sequence, 81 residues long: Ferredoxin (81 aa).

One can recognise a 4Fe-4S ferredoxin-type domain in the interval 2 to 30; it reads KYTIVDKETCIACGACGAAAPDIYDYDED. Cysteine 11, cysteine 14, cysteine 17, and cysteine 61 together coordinate [4Fe-4S] cluster.

[4Fe-4S] cluster serves as cofactor.

Ferredoxins are iron-sulfur proteins that transfer electrons in a wide variety of metabolic reactions. The chain is Ferredoxin from Bacillus thermoproteolyticus.